The sequence spans 151 residues: Transcriptional repressor NrdR (151 aa).

The segment at 3–34 (CPHCGNCDDKVMESRTLAQGDCIRRRRECLAC) is a zinc-finger region. In terms of domain architecture, ATP-cone spans 49-141 (FMVIKKDGRR…VYKQFSNLDE (93 aa)).

The protein belongs to the NrdR family. It depends on Zn(2+) as a cofactor.

In terms of biological role, negatively regulates transcription of bacterial ribonucleotide reductase nrd genes and operons by binding to NrdR-boxes. In Treponema denticola (strain ATCC 35405 / DSM 14222 / CIP 103919 / JCM 8153 / KCTC 15104), this protein is Transcriptional repressor NrdR.